The chain runs to 363 residues: Putative dipeptidase YkvY (363 aa).

The Mn(2+) site is built by Asp-222, Asp-233, His-297, Glu-326, and Glu-340.

Belongs to the peptidase M24B family. It depends on Mn(2+) as a cofactor.

This is Putative dipeptidase YkvY (ykvY) from Bacillus subtilis (strain 168).